The following is a 259-amino-acid chain: 3'-5' ssDNA/RNA exonuclease TatD (259 aa).

Glutamate 92, histidine 128, and histidine 153 together coordinate a divalent metal cation.

This sequence belongs to the metallo-dependent hydrolases superfamily. TatD-type hydrolase family. TatD subfamily. Monomer. The cofactor is Mg(2+).

Its subcellular location is the cytoplasm. 3'-5' exonuclease that prefers single-stranded DNA and RNA. May play a role in the H(2)O(2)-induced DNA damage repair. This is 3'-5' ssDNA/RNA exonuclease TatD from Erwinia amylovora (strain ATCC 49946 / CCPPB 0273 / Ea273 / 27-3).